We begin with the raw amino-acid sequence, 292 residues long: MTEFDLSTREGRWKHFGSVDPIEGTKPTTKNEMTDLQSTHKNFLFEIEEVGIKNLIYPVNIDRFQTAGRFSFSTSLNKDEKGINMSRILESVEKHYNNGLELNFDTLYQVLRTLQTNMKQNSSGVDVSGKWFFDRFSPVTNIKAVGNADVTYGLAIEQDQITRKEITIEATVTTLCPCSKEISEYSAHNQRGVVTVKVYLDKNNQVVDDYKDKILDAMEANASSILYPILKRPDEKRVTERAYENPRFVEDLIRLIAADLVEFDWIDGFDIECRNEESIHQHDAFAKLKYRK.

The protein belongs to the GTP cyclohydrolase IV family.

It catalyses the reaction GTP + H2O = 7,8-dihydroneopterin 3'-triphosphate + formate + H(+). The protein operates within cofactor biosynthesis; 7,8-dihydroneopterin triphosphate biosynthesis; 7,8-dihydroneopterin triphosphate from GTP: step 1/1. Functionally, converts GTP to 7,8-dihydroneopterin triphosphate. The polypeptide is GTP cyclohydrolase FolE2 (Staphylococcus haemolyticus (strain JCSC1435)).